A 418-amino-acid polypeptide reads, in one-letter code: UDP-N-acetylglucosamine 1-carboxyvinyltransferase (418 aa).

Residue Lys-22–Asn-23 participates in phosphoenolpyruvate binding. Arg-91 contacts UDP-N-acetyl-alpha-D-glucosamine. The Proton donor role is filled by Cys-115. Cys-115 carries the post-translational modification 2-(S-cysteinyl)pyruvic acid O-phosphothioketal. 2 residues coordinate UDP-N-acetyl-alpha-D-glucosamine: Asp-303 and Ile-325.

Belongs to the EPSP synthase family. MurA subfamily.

The protein localises to the cytoplasm. The catalysed reaction is phosphoenolpyruvate + UDP-N-acetyl-alpha-D-glucosamine = UDP-N-acetyl-3-O-(1-carboxyvinyl)-alpha-D-glucosamine + phosphate. The protein operates within cell wall biogenesis; peptidoglycan biosynthesis. Its function is as follows. Cell wall formation. Adds enolpyruvyl to UDP-N-acetylglucosamine. In Syntrophobacter fumaroxidans (strain DSM 10017 / MPOB), this protein is UDP-N-acetylglucosamine 1-carboxyvinyltransferase.